The following is a 348-amino-acid chain: Anthranilate phosphoribosyltransferase (348 aa).

5-phospho-alpha-D-ribose 1-diphosphate is bound by residues G80, 83–84, T88, 90–93, 108–116, and S120; these read GD, NVST, and KHGNRSVSS. An anthranilate-binding site is contributed by G80. S92 provides a ligand contact to Mg(2+). Anthranilate is bound at residue N111. Residue R166 coordinates anthranilate. Residues D224 and E225 each coordinate Mg(2+).

This sequence belongs to the anthranilate phosphoribosyltransferase family. As to quaternary structure, homodimer. Mg(2+) is required as a cofactor.

The catalysed reaction is N-(5-phospho-beta-D-ribosyl)anthranilate + diphosphate = 5-phospho-alpha-D-ribose 1-diphosphate + anthranilate. The protein operates within amino-acid biosynthesis; L-tryptophan biosynthesis; L-tryptophan from chorismate: step 2/5. In terms of biological role, catalyzes the transfer of the phosphoribosyl group of 5-phosphorylribose-1-pyrophosphate (PRPP) to anthranilate to yield N-(5'-phosphoribosyl)-anthranilate (PRA). The protein is Anthranilate phosphoribosyltransferase of Sorangium cellulosum (strain So ce56) (Polyangium cellulosum (strain So ce56)).